The following is a 265-amino-acid chain: Very long chain fatty acid elongase 6 (265 aa).

A glycan (N-linked (GlcNAc...) asparagine) is linked at Asn-2. 7 consecutive transmembrane segments (helical) span residues 34–51, 70–90, 111–131, 137–156, 159–179, 197–217, and 232–252; these read FLFSALYAAFIFGGRHLM, LAVFSIFGAVRTAPYMLYILM, FWAYAFVLSKAPELGDTIFII, LIFLHWYHHITVLLYSWYSY, MVAGGGWFMTMNYGVHAVMYS, FITLSQITQMLVGCVINYLVF, and IIWSSLMYLSYFVLFCHFFFE.

The protein belongs to the ELO family. ELOVL6 subfamily. In terms of processing, N-Glycosylated.

The protein localises to the endoplasmic reticulum membrane. The catalysed reaction is a very-long-chain acyl-CoA + malonyl-CoA + H(+) = a very-long-chain 3-oxoacyl-CoA + CO2 + CoA. It catalyses the reaction hexadecanoyl-CoA + malonyl-CoA + H(+) = 3-oxooctadecanoyl-CoA + CO2 + CoA. It carries out the reaction (9Z)-hexadecenoyl-CoA + malonyl-CoA + H(+) = 3-oxo-(11Z)-octadecenoyl-CoA + CO2 + CoA. The enzyme catalyses dodecanoyl-CoA + malonyl-CoA + H(+) = 3-oxotetradecanoyl-CoA + CO2 + CoA. The catalysed reaction is tetradecanoyl-CoA + malonyl-CoA + H(+) = 3-oxohexadecanoyl-CoA + CO2 + CoA. It catalyses the reaction (9Z)-octadecenoyl-CoA + malonyl-CoA + H(+) = 3-oxo-(11Z)-eicosenoyl-CoA + CO2 + CoA. It carries out the reaction (9Z,12Z)-octadecadienoyl-CoA + malonyl-CoA + H(+) = (11Z,14Z)-3-oxoicosa-11,14-dienoyl-CoA + CO2 + CoA. The enzyme catalyses (9Z,12Z,15Z)-octadecatrienoyl-CoA + malonyl-CoA + H(+) = (11Z,14Z,17Z)-3-oxoeicosatrienoyl-CoA + CO2 + CoA. It participates in lipid metabolism; fatty acid biosynthesis. Its activity is regulated as follows. The reaction is stimulated by the presence of HSD17B12, the enzyme catalyzing the second step of the elongation cycle. Catalyzes the first and rate-limiting reaction of the four reactions that constitute the long-chain fatty acids elongation cycle. This endoplasmic reticulum-bound enzymatic process allows the addition of 2 carbons to the chain of long- and very long-chain fatty acids (VLCFAs) per cycle. Condensing enzyme that elongates fatty acids with 12, 14 and 16 carbons with higher activity toward C16:0 acyl-CoAs. Catalyzes the synthesis of unsaturated C16 long chain fatty acids and, to a lesser extent, C18:0 and those with low desaturation degree. May participate in the production of saturated and monounsaturated VLCFAs of different chain lengths that are involved in multiple biological processes as precursors of membrane lipids and lipid mediators. In Gallus gallus (Chicken), this protein is Very long chain fatty acid elongase 6.